Consider the following 572-residue polypeptide: Proline--tRNA ligase (572 aa).

It belongs to the class-II aminoacyl-tRNA synthetase family. ProS type 1 subfamily. In terms of assembly, homodimer.

It is found in the cytoplasm. It carries out the reaction tRNA(Pro) + L-proline + ATP = L-prolyl-tRNA(Pro) + AMP + diphosphate. Its function is as follows. Catalyzes the attachment of proline to tRNA(Pro) in a two-step reaction: proline is first activated by ATP to form Pro-AMP and then transferred to the acceptor end of tRNA(Pro). As ProRS can inadvertently accommodate and process non-cognate amino acids such as alanine and cysteine, to avoid such errors it has two additional distinct editing activities against alanine. One activity is designated as 'pretransfer' editing and involves the tRNA(Pro)-independent hydrolysis of activated Ala-AMP. The other activity is designated 'posttransfer' editing and involves deacylation of mischarged Ala-tRNA(Pro). The misacylated Cys-tRNA(Pro) is not edited by ProRS. The protein is Proline--tRNA ligase of Shewanella amazonensis (strain ATCC BAA-1098 / SB2B).